The following is a 122-amino-acid chain: Large ribosomal subunit protein uL14 (122 aa).

The protein belongs to the universal ribosomal protein uL14 family. Part of the 50S ribosomal subunit. Forms a cluster with proteins L3 and L19. In the 70S ribosome, L14 and L19 interact and together make contacts with the 16S rRNA in bridges B5 and B8.

In terms of biological role, binds to 23S rRNA. Forms part of two intersubunit bridges in the 70S ribosome. The sequence is that of Large ribosomal subunit protein uL14 from Nitratidesulfovibrio vulgaris (strain ATCC 29579 / DSM 644 / CCUG 34227 / NCIMB 8303 / VKM B-1760 / Hildenborough) (Desulfovibrio vulgaris).